The chain runs to 407 residues: uncharacterized protein (407 aa).

At 1 to 290 (MPLNIIGTAL…SNSLRRVISN (290 aa)) the chain is on the lumenal side. NADP(+) contacts are provided by Asp114, Lys236, and Ser281. Catalysis depends on Lys236, which acts as the Lowers pKa of active site Tyr. The chain crosses the membrane as a helical span at residues 291–311 (GSVVLLIILYCILLYPILWLF). Topologically, residues 312–407 (TKSGRRGDQS…KSQNKSRKDD (96 aa)) are cytoplasmic. A coiled-coil region spans residues 361–390 (ELQKKLFDNTERDILQLEKKVAAKRNANKT). The tract at residues 383-407 (AKRNANKTGNQNSKKKSQNKSRKDD) is disordered. The segment covering 395–407 (SKKKSQNKSRKDD) has biased composition (basic residues).

The protein belongs to the short-chain dehydrogenases/reductases (SDR) family.

Its subcellular location is the endoplasmic reticulum membrane. Functionally, may be involved in lipid metabolism. This is an uncharacterized protein from Saccharomyces cerevisiae (strain ATCC 204508 / S288c) (Baker's yeast).